The following is a 177-amino-acid chain: tRNA (cytidine(56)-2'-O)-methyltransferase (177 aa).

Residues L84 and 109-113 (GAEKV) each bind S-adenosyl-L-methionine.

It belongs to the aTrm56 family. In terms of assembly, homodimer.

The protein localises to the cytoplasm. It catalyses the reaction cytidine(56) in tRNA + S-adenosyl-L-methionine = 2'-O-methylcytidine(56) in tRNA + S-adenosyl-L-homocysteine + H(+). Its function is as follows. Specifically catalyzes the AdoMet-dependent 2'-O-ribose methylation of cytidine at position 56 in tRNAs. This Methanosarcina barkeri (strain Fusaro / DSM 804) protein is tRNA (cytidine(56)-2'-O)-methyltransferase.